A 168-amino-acid polypeptide reads, in one-letter code: Cell division inhibitor SulA (168 aa).

The tract at residues Ala-106–Tyr-112 is ftsZ binding. Positions Lys-161–His-168 are lon protease binding.

Belongs to the SulA family. In terms of assembly, interacts with FtsZ. Is rapidly cleaved and degraded by the Lon protease once DNA damage is repaired.

Functionally, component of the SOS system and an inhibitor of cell division. Accumulation of SulA causes rapid cessation of cell division and the appearance of long, non-septate filaments. In the presence of GTP, binds a polymerization-competent form of FtsZ in a 1:1 ratio, thus inhibiting FtsZ polymerization and therefore preventing it from participating in the assembly of the Z ring. This mechanism prevents the premature segregation of damaged DNA to daughter cells during cell division. The polypeptide is Cell division inhibitor SulA (Serratia marcescens).